We begin with the raw amino-acid sequence, 68 residues long: Non-specific lipid-transfer protein 2 (68 aa).

Belongs to the plant LTP family.

Its function is as follows. Plant non-specific lipid-transfer proteins transfer phospholipids as well as galactolipids across membranes. May play a role in wax or cutin deposition in the cell walls of expanding epidermal cells and certain secretory tissues. This chain is Non-specific lipid-transfer protein 2, found in Prunus armeniaca (Apricot).